The chain runs to 670 residues: tRNA 5-methylaminomethyl-2-thiouridine biosynthesis bifunctional protein MnmC (670 aa).

Residues 1 to 245 (MKPIAIQPAS…KREMLTGALS (245 aa)) are tRNA (mnm(5)s(2)U34)-methyltransferase. Residues 271–670 (VGGGIASALL…RKLLKGRAAS (400 aa)) are FAD-dependent cmnm(5)s(2)U34 oxidoreductase.

This sequence in the N-terminal section; belongs to the methyltransferase superfamily. tRNA (mnm(5)s(2)U34)-methyltransferase family. The protein in the C-terminal section; belongs to the DAO family. FAD is required as a cofactor.

The protein localises to the cytoplasm. It carries out the reaction 5-aminomethyl-2-thiouridine(34) in tRNA + S-adenosyl-L-methionine = 5-methylaminomethyl-2-thiouridine(34) in tRNA + S-adenosyl-L-homocysteine + H(+). In terms of biological role, catalyzes the last two steps in the biosynthesis of 5-methylaminomethyl-2-thiouridine (mnm(5)s(2)U) at the wobble position (U34) in tRNA. Catalyzes the FAD-dependent demodification of cmnm(5)s(2)U34 to nm(5)s(2)U34, followed by the transfer of a methyl group from S-adenosyl-L-methionine to nm(5)s(2)U34, to form mnm(5)s(2)U34. This Cronobacter sakazakii (strain ATCC BAA-894) (Enterobacter sakazakii) protein is tRNA 5-methylaminomethyl-2-thiouridine biosynthesis bifunctional protein MnmC.